Consider the following 116-residue polypeptide: Nitrogenase iron-iron protein delta chain (116 aa).

In terms of assembly, hexamer of two alpha, two beta, and two delta chains. The cofactor is iron-sulfur cluster.

It catalyses the reaction N2 + 8 reduced [2Fe-2S]-[ferredoxin] + 16 ATP + 16 H2O = H2 + 8 oxidized [2Fe-2S]-[ferredoxin] + 2 NH4(+) + 16 ADP + 16 phosphate + 6 H(+). Functionally, the key enzymatic reactions in nitrogen fixation are catalyzed by the nitrogenase complex, which has 2 components: the iron protein (component 2) and a component 1 which is either a molybdenum-iron protein, a vanadium-iron, or an iron-iron protein. This Clostridium pasteurianum protein is Nitrogenase iron-iron protein delta chain (anfG).